We begin with the raw amino-acid sequence, 207 residues long: Intraflagellar transport protein 43 homolog A (207 aa).

The interval 1-104 (MDDNLQLGDS…GSDDEGDIPV (104 aa)) is disordered.

Belongs to the IFT43 family. Component of IFT complex A.

Its function is as follows. Component of IFT complex A (IFT-A) involved in retrograde ciliary transport along microtubules from the ciliary tip to the base. This Salmo salar (Atlantic salmon) protein is Intraflagellar transport protein 43 homolog A (ift43a).